The sequence spans 115 residues: MIIGIGVDVCDISRWEAAVQRHPGMVRKMLTHTEAVMPARSQAARFAAKEALYKALGGGEGLSWQDCEVVTDGEAVRFELRGSLARRAEELGVRRVHLSLTHDAGVAVAMVVCEG.

Mg(2+) is bound by residues D8 and E50.

This sequence belongs to the P-Pant transferase superfamily. AcpS family. Mg(2+) serves as cofactor.

The protein resides in the cytoplasm. It catalyses the reaction apo-[ACP] + CoA = holo-[ACP] + adenosine 3',5'-bisphosphate + H(+). Its function is as follows. Transfers the 4'-phosphopantetheine moiety from coenzyme A to a Ser of acyl-carrier-protein. In Cutibacterium acnes (strain DSM 16379 / KPA171202) (Propionibacterium acnes), this protein is Holo-[acyl-carrier-protein] synthase.